Reading from the N-terminus, the 113-residue chain is Large ribosomal subunit protein bL19 (113 aa).

The protein belongs to the bacterial ribosomal protein bL19 family.

Its function is as follows. This protein is located at the 30S-50S ribosomal subunit interface and may play a role in the structure and function of the aminoacyl-tRNA binding site. This Desulfitobacterium hafniense (strain DSM 10664 / DCB-2) protein is Large ribosomal subunit protein bL19.